A 138-amino-acid chain; its full sequence is Small ribosomal subunit protein uS11 (138 aa).

Disordered stretches follow at residues 1–29 (MPPK…PHGA) and 117–138 (GAIS…RRRV). Basic residues predominate over residues 13–22 (KGQKTRRREK).

It belongs to the universal ribosomal protein uS11 family. Part of the 30S ribosomal subunit. Interacts with proteins S7 and S18. Binds to IF-3.

Located on the platform of the 30S subunit, it bridges several disparate RNA helices of the 16S rRNA. Forms part of the Shine-Dalgarno cleft in the 70S ribosome. The polypeptide is Small ribosomal subunit protein uS11 (Mycobacterium ulcerans (strain Agy99)).